We begin with the raw amino-acid sequence, 182 residues long: UPF0397 protein BCAH187_A2708 (182 aa).

Transmembrane regions (helical) follow at residues 9-29, 40-60, 71-91, 114-134, and 142-162; these read VVAI…GFSI, AILT…IGLI, WGIW…MGFI, ITGL…DIIV, and IVIQ…VLGL.

Belongs to the UPF0397 family.

It localises to the cell membrane. The chain is UPF0397 protein BCAH187_A2708 from Bacillus cereus (strain AH187).